A 333-amino-acid chain; its full sequence is MFYDDDADLSIIQGRKVGVIGYGSQGHAHSLSLRDSGVQVRVGLKQGSRSRPKVEEQGLDVDTPAEVAKWADVVMVLAPDTAQAEIFAGDIEPNLKPGDALFFGHGLNVHFGLIKPPADVAVAMVAPKGPGHLVRRQFVDGKGVPCLVAVEQDPRGDGLALALSYAKAIGGTRAGVIKTTFKDETETDLFGEQTVLCGGTEELVKAGFEVMVEAGYPAELAYFEVLHELKLIVDLMYEGGLARMYYSVSDTAEFGGYLSGPRVIDAGTKERMRDILREIQDGSFVHKLVADVEGGNKQLEELRRQNAEHPIEVVGKKLRDLMSWVDRPITETA.

The KARI N-terminal Rossmann domain occupies 1 to 179 (MFYDDDADLS…GGTRAGVIKT (179 aa)). NADP(+) contacts are provided by residues 22-25 (YGSQ), Lys-45, Ser-48, Ser-50, and 80-83 (DTAQ). The active site involves His-105. Gly-131 lines the NADP(+) pocket. In terms of domain architecture, KARI C-terminal knotted spans 180 to 325 (TFKDETETDL…KKLRDLMSWV (146 aa)). Residues Asp-188, Glu-192, Glu-224, and Glu-228 each contribute to the Mg(2+) site. Ser-249 is a binding site for substrate.

This sequence belongs to the ketol-acid reductoisomerase family. The cofactor is Mg(2+).

It carries out the reaction (2R)-2,3-dihydroxy-3-methylbutanoate + NADP(+) = (2S)-2-acetolactate + NADPH + H(+). The catalysed reaction is (2R,3R)-2,3-dihydroxy-3-methylpentanoate + NADP(+) = (S)-2-ethyl-2-hydroxy-3-oxobutanoate + NADPH + H(+). It functions in the pathway amino-acid biosynthesis; L-isoleucine biosynthesis; L-isoleucine from 2-oxobutanoate: step 2/4. The protein operates within amino-acid biosynthesis; L-valine biosynthesis; L-valine from pyruvate: step 2/4. Involved in the biosynthesis of branched-chain amino acids (BCAA). Catalyzes an alkyl-migration followed by a ketol-acid reduction of (S)-2-acetolactate (S2AL) to yield (R)-2,3-dihydroxy-isovalerate. In the isomerase reaction, S2AL is rearranged via a Mg-dependent methyl migration to produce 3-hydroxy-3-methyl-2-ketobutyrate (HMKB). In the reductase reaction, this 2-ketoacid undergoes a metal-dependent reduction by NADPH to yield (R)-2,3-dihydroxy-isovalerate. The sequence is that of Ketol-acid reductoisomerase (NADP(+)) from Mycobacterium bovis (strain ATCC BAA-935 / AF2122/97).